The following is a 306-amino-acid chain: Lipid A biosynthesis lauroyltransferase (306 aa).

The helical transmembrane segment at 17-37 threads the bilayer; the sequence is WLTWLGIGVLWLVVQLPYPVI. The short motif at 132–137 is the HXXXXD motif element; sequence HFLTLE.

It belongs to the LpxL/LpxM/LpxP family. Monomer.

It is found in the cell inner membrane. It carries out the reaction dodecanoyl-[ACP] + alpha-Kdo-(2-&gt;4)-alpha-Kdo-(2-&gt;6)-lipid IVA (E. coli) = alpha-Kdo-(2-&gt;4)-alpha-Kdo-(2-&gt;6)-(dodecanoyl)-lipid IVA (E. coli) + holo-[ACP]. The protein operates within glycolipid biosynthesis; KDO(2)-lipid A biosynthesis; KDO(2)-lipid A from CMP-3-deoxy-D-manno-octulosonate and lipid IV(A): step 3/4. It participates in bacterial outer membrane biogenesis; lipopolysaccharide biosynthesis. Catalyzes the transfer of laurate from lauroyl-[acyl-carrier-protein] (ACP) to Kdo(2)-lipid IV(A) to form Kdo(2)-(lauroyl)-lipid IV(A). Has 10 fold selectivity for lauroyl-ACP over myristoyl-ACP. In vitro, can also catalyze a slow second acylation reaction leading to the formation of Kdo(2)-(dilauroyl)-lipid IV(A). This is Lipid A biosynthesis lauroyltransferase from Escherichia coli (strain K12).